A 424-amino-acid chain; its full sequence is Hemagglutinin-esterase (424 aa).

Residues 1-16 form the signal peptide; sequence MFLLPRFVLVSCIIGS. The interval 7–127 is esterase domain 1; sequence FVLVSCIIGS…SNDIWMQNKG (121 aa). Residues 17–392 lie on the Virion surface side of the membrane; sequence LGFENPPTNV…PICVYDPLPL (376 aa). The active-site Nucleophile is Ser-40. An intrachain disulfide couples Cys-44 to Cys-65. N-linked (GlcNAc...) asparagine; by host glycosylation is found at Asn-54, Asn-89, Asn-153, Asn-236, and Asn-301. 3 cysteine pairs are disulfide-bonded: Cys-113/Cys-162, Cys-197/Cys-276, and Cys-205/Cys-249. Positions 128-266 are receptor binding; sequence LFYTQVYKNM…GNYLAISNEL (139 aa). Positions 267–379 are esterase domain 2; sequence LLTVPTKAIC…RCPTAADINT (113 aa). Cysteines 307 and 312 form a disulfide. An N-linked (GlcNAc...) asparagine; by host glycan is attached at Asn-316. Catalysis depends on charge relay system residues Asp-326 and His-329. Cys-347 and Cys-371 are disulfide-bonded. A glycan (N-linked (GlcNAc...) asparagine; by host) is linked at Asn-358. The helical transmembrane segment at 393-413 threads the bilayer; the sequence is ILLGILLGVAVIIIVVLLLYF. Residues 414-424 lie on the Intravirion side of the membrane; sequence MVDNGTRLHDA. A glycan (N-linked (GlcNAc...) asparagine; by host) is linked at Asn-417.

Belongs to the influenza type C/coronaviruses hemagglutinin-esterase family. As to quaternary structure, homodimer; disulfide-linked. Forms a complex with the M protein in the pre-Golgi. Associates then with S-M complex to form a ternary complex S-M-HE. In terms of processing, N-glycosylated in the host RER.

The protein resides in the virion membrane. Its subcellular location is the host cell membrane. The catalysed reaction is N-acetyl-9-O-acetylneuraminate + H2O = N-acetylneuraminate + acetate + H(+). It carries out the reaction N-acetyl-4-O-acetylneuraminate + H2O = N-acetylneuraminate + acetate + H(+). Functionally, structural protein that makes short spikes at the surface of the virus. Contains receptor binding and receptor-destroying activities. Mediates de-O-acetylation of N-acetyl-4-O-acetylneuraminic acid, which is probably the receptor determinant recognized by the virus on the surface of erythrocytes and susceptible cells. This receptor-destroying activity is important for virus release as it probably helps preventing self-aggregation and ensures the efficient spread of the progeny virus from cell to cell. May serve as a secondary viral attachment protein for initiating infection, the spike protein being the major one. May become a target for both the humoral and the cellular branches of the immune system. In Bovine coronavirus (strain G95) (BCoV), this protein is Hemagglutinin-esterase.